The primary structure comprises 475 residues: AAA-ATPase At1g43910 (475 aa).

Residues 11–28 traverse the membrane as a helical segment; sequence VSAVFSLYTSFSAITMLF. Thr-85 carries the post-translational modification Phosphothreonine. Residue 246 to 253 coordinates ATP; sequence GPPGTGKS. Disordered stretches follow at residues 306 to 328 and 453 to 475; these read SRRRQSKKKEEDGGEDDGEPQKR and KGEDSSVEEEGEIEDAETKEAET. The span at 457-467 shows a compositional bias: acidic residues; that stretch reads SSVEEEGEIED.

This sequence belongs to the AAA ATPase family. BCS1 subfamily. The cofactor is Mg(2+). Expressed in developing shoots.

It is found in the membrane. It catalyses the reaction ATP + H2O = ADP + phosphate + H(+). This Arabidopsis thaliana (Mouse-ear cress) protein is AAA-ATPase At1g43910.